The sequence spans 467 residues: Probable endopeptidase p60 (467 aa).

Positions 1 to 27 are cleaved as a signal peptide; that stretch reads MNMKKATIAATAGIAVTAFAAPTIASA. The region spanning 28–71 is the LysM 1 domain; it reads STVVVEAGDTLWGIAQSKGTTVDAIKKANNLTTDKIVPGQKLQV. An SH3b domain is found at 79–143; it reads KAEKSVSATW…VNGKYLTDKA (65 aa). Disordered regions lie at residues 154 to 199 and 247 to 348; these read KKET…QNAT and KTVA…GSTN. The span at 172–185 shows a compositional bias: low complexity; it reads KQPTTQQTAPAPKA. In terms of domain architecture, LysM 2 spans 199–242; sequence TTHNVKSGDTIWALSVKYGVSVQDIMSWNNLSSSSIYVGQKLAI. Residues 288–348 show a composition bias toward low complexity; it reads TEQQTTTKAP…NTNTNQGSTN (61 aa). The 7 X 2 AA tandem repeats of T-N stretch occupies residues 330–343; the sequence is TNTNTNTNTNTNTN. In terms of domain architecture, NlpC/P60 spans 349–467; it reads NASASALIAE…GKFLVGFGRV (119 aa). Catalysis depends on Cys379, which acts as the Nucleophile. The active-site Proton acceptor is the His429. Asn441 is an active-site residue.

The protein belongs to the peptidase C40 family.

This major extracellular protein may be involved in the invasion of non-professional phagocytic cells by Listeria. This is Probable endopeptidase p60 (iap) from Listeria innocua serovar 6a (strain ATCC BAA-680 / CLIP 11262).